A 132-amino-acid chain; its full sequence is Small ribosomal subunit protein uS8 (132 aa).

This sequence belongs to the universal ribosomal protein uS8 family. In terms of assembly, part of the 30S ribosomal subunit. Contacts proteins S5 and S12.

Its function is as follows. One of the primary rRNA binding proteins, it binds directly to 16S rRNA central domain where it helps coordinate assembly of the platform of the 30S subunit. This is Small ribosomal subunit protein uS8 from Rickettsia typhi (strain ATCC VR-144 / Wilmington).